Consider the following 380-residue polypeptide: Glutamyl-tRNA reductase 1 (380 aa).

Residues 42-45, Ser-93, 98-100, and Gln-104 contribute to the substrate site; these read TCNR and ETD. Catalysis depends on Cys-43, which acts as the Nucleophile. 172–177 provides a ligand contact to NADP(+); that stretch reads GAGAVG.

The protein belongs to the glutamyl-tRNA reductase family. In terms of assembly, homodimer.

It carries out the reaction (S)-4-amino-5-oxopentanoate + tRNA(Glu) + NADP(+) = L-glutamyl-tRNA(Glu) + NADPH + H(+). The protein operates within porphyrin-containing compound metabolism; protoporphyrin-IX biosynthesis; 5-aminolevulinate from L-glutamyl-tRNA(Glu): step 1/2. In terms of biological role, catalyzes the NADPH-dependent reduction of glutamyl-tRNA(Glu) to glutamate 1-semialdehyde (GSA). The protein is Glutamyl-tRNA reductase 1 of Pyrobaculum calidifontis (strain DSM 21063 / JCM 11548 / VA1).